The sequence spans 364 residues: N-acetyl-gamma-glutamyl-phosphate reductase (364 aa).

Cys-157 is an active-site residue.

Belongs to the NAGSA dehydrogenase family. Type 1 subfamily.

It is found in the cytoplasm. It carries out the reaction N-acetyl-L-glutamate 5-semialdehyde + phosphate + NADP(+) = N-acetyl-L-glutamyl 5-phosphate + NADPH + H(+). It functions in the pathway amino-acid biosynthesis; L-arginine biosynthesis; N(2)-acetyl-L-ornithine from L-glutamate: step 3/4. Its function is as follows. Catalyzes the NADPH-dependent reduction of N-acetyl-5-glutamyl phosphate to yield N-acetyl-L-glutamate 5-semialdehyde. This chain is N-acetyl-gamma-glutamyl-phosphate reductase, found in Bifidobacterium animalis subsp. lactis (strain AD011).